The chain runs to 379 residues: Protein COS4 (379 aa).

4 helical membrane passes run 43-63, 70-90, 233-253, and 255-275; these read IYKSLAFRIWMLLWLPLSVWW, IYPLMVSLLVLFWGPVFVLVI, ISNIFMLIPFLNFLCCIYVSR, and MCLLLRTLYLGWILFMLVQGF.

It belongs to the DUP/COS family.

It is found in the membrane. This Saccharomyces cerevisiae (strain ATCC 204508 / S288c) (Baker's yeast) protein is Protein COS4 (COS4).